We begin with the raw amino-acid sequence, 181 residues long: Small ribosomal subunit protein uS4 (181 aa).

One can recognise an S4 RNA-binding domain in the interval 108–180; sequence RRLQTIVYRK…GERQRIMNQR (73 aa).

This sequence belongs to the universal ribosomal protein uS4 family. Part of the 30S ribosomal subunit. Contacts protein S5. The interaction surface between S4 and S5 is involved in control of translational fidelity.

One of the primary rRNA binding proteins, it binds directly to 16S rRNA where it nucleates assembly of the body of the 30S subunit. Its function is as follows. With S5 and S12 plays an important role in translational accuracy. The sequence is that of Small ribosomal subunit protein uS4 from Methanocorpusculum labreanum (strain ATCC 43576 / DSM 4855 / Z).